A 169-amino-acid chain; its full sequence is MMENPIKGRVWKFGNDIDTDVIIPGKYLRTKDMQVFAAHAMEGIDPGFSKKAKPGDIIVAGDNFGCGSSREQAPLALKHAGIACIVAKSFARIFFRNAINIGLPLMEADIECEEGDQIEVDLLKGEVKVSGKGVFRGNKLPDFLLDMLTDGGLVAHRKKVRDQEKEESA.

A YLRT motif is present at residues 27-30 (YLRT).

It belongs to the LeuD family. LeuD type 2 subfamily. In terms of assembly, heterotetramer of 2 HacA and 2 HacB proteins.

It carries out the reaction (2R)-homocitrate = (2R,3S)-homoisocitrate. The enzyme catalyses (2R)-homocitrate = cis-homoaconitate + H2O. It catalyses the reaction (2R,3S)-homoisocitrate = cis-homoaconitate + H2O. The catalysed reaction is cis-(homo)2aconitate + H2O = (2R,3S)-iso(homo)2citrate. It carries out the reaction cis-(homo)3aconitate + H2O = (2R,3S)-iso(homo)3citrate. Its pathway is organic acid metabolism; 2-oxosuberate biosynthesis. Functionally, component of a hydro-lyase with broad substrate specificity for cis-unsaturated tricarboxylic acids. Catalyzes both the reversible dehydration of (R)-homocitrate ((R)-2-hydroxybutane-1,2,4-tricarboxylate) to produce cis-homoaconitate ((Z)-but-1-ene-1,2,4-tricarboxylate), and its hydration to homoisocitrate ((1R,2S)-1-hydroxybutane-1,2,4-tricarboxylate). Is also able to hydrate the analogous longer chain substrates cis-homo(2)-aconitate, cis-homo(3)-aconitate. These reactions are part of the biosynthesis pathway of coenzyme B. The chain is Methanogen homoaconitase small subunit (hacB) from Methanosarcina mazei (strain ATCC BAA-159 / DSM 3647 / Goe1 / Go1 / JCM 11833 / OCM 88) (Methanosarcina frisia).